A 164-amino-acid polypeptide reads, in one-letter code: Lipocalin-like 1 protein (164 aa).

This sequence belongs to the calycin superfamily. Lipocalin family.

The protein is Lipocalin-like 1 protein (LCNL1) of Homo sapiens (Human).